A 269-amino-acid chain; its full sequence is MASFNNVLTKAAAGRLCKAMGVRMVANPLVVQLAANAGFEALFIDLEHSTLSLADASAIACAGLLSGLTPLVRVPYQCGIGFVQQALDGGAMGIVFPHIHTAADARAAVQTCKFPPLGVRSMWGQQPALGMRVTAIGRIVEVCNAAASSVIVMIEAASSIENIEAIAAVEGVDVLLVGCLDLSTDMGMPGRFETRAFRTALEKVSAACRHSGKTMGLAGIYNNRELHEWAINTLNVRFMLCQQDSNLLAMAAVDCASAVAKIDRARLLN.

His48 serves as the catalytic Proton acceptor. A divalent metal cation contacts are provided by Glu155 and Asp181. Asp181 provides a ligand contact to substrate.

It belongs to the HpcH/HpaI aldolase family. As to quaternary structure, homohexamer; trimer of dimers. The cofactor is Co(2+). Requires Mn(2+) as cofactor. Zn(2+) serves as cofactor. Fe(2+) is required as a cofactor. It depends on Mg(2+) as a cofactor.

The catalysed reaction is 4-hydroxy-4-methyl-2-oxoglutarate = 2 pyruvate. The protein operates within secondary metabolite biosynthesis. Functionally, 4-hydroxy-4-methyl-2-oxoglutarate aldolase; part of the gene cluster that mediates the biosynthesis of the tetramic acid Sch210972, a potential anti-HIV fungal natural product that contains a decalin core. The PKS module of cghG together with the enoylreductase cghC catalyze the formation of the polyketide unit which is then conjugated to 4-hydroxyl-4-methyl glutamate (HMG) by the condensation domain of the cghG NRPS module. One unique structural feature of Sch210972 is the tetramic acid motif proposed to be derived from the non-proteinogenic amino acid HMG, by a Dieckmann-type condensation catalyzed by the reductase domain of cghG. The aldolase cghB catalyzes the aldol condensation of 2 molecules of pyruvic acid to yield the intermediate 4-hydroxyl-4-methyl-2-oxoglutarate (HMOG), which can then be stereoselectively transaminated by an unidentified enzyme to form HMG. The Diels-Alderase cghA then uses the Dieckmann product released by cghG as substrate and catalyzes the Diels-Alder cycloaddition to form the decalin ring of Sch210972. CghA also suppresses the nonenzymatic formation of the alternative stereoisomer. In Chaetomium globosum (strain ATCC 6205 / CBS 148.51 / DSM 1962 / NBRC 6347 / NRRL 1970) (Soil fungus), this protein is 4-hydroxy-4-methyl-2-oxoglutarate aldolase cghB.